A 545-amino-acid chain; its full sequence is Arginine-containing cyclodipeptide synthase ateA (545 aa).

Over residues 390–425 (GNQQTPTQSADMDSTVSHRQQQPASSRSYTSKQNQM) the composition is skewed to polar residues. The segment at 390-433 (GNQQTPTQSADMDSTVSHRQQQPASSRSYTSKQNQMPRPLVISV) is disordered. Residues 434-438 (DDPSE) carry the Conserved DDXXE motif motif.

It belongs to the arginine-containing cyclodipeptide synthase family.

It carries out the reaction L-glutamyl-tRNA(Glu) + L-arginyl-tRNA(Arg) = cyclo(L-arginyl-L-glutamyl) + tRNA(Glu) + tRNA(Arg) + 2 H(+). It functions in the pathway secondary metabolite biosynthesis. In terms of biological role, arginine-containing cyclodipeptide synthase; part of the cluster that mediates the biosynthesis of a highly modified cyclo-arginine-glutamate dipeptide (cRE). Within the pathway, ateA acts as the scaffold-generating enzyme and is responsible for formation of the cyclo-Arg-Glu diketopiperazine (cRW) from L-arginyl-tRNA(Arg) + L-glutamyl-tRNA(Glu). Additional enzymes from the cluster then further modify the cyclo-Arg-Glu diketopiperazine (cRW) scaffold. The chain is Arginine-containing cyclodipeptide synthase ateA from Aspergillus terreus.